The chain runs to 101 residues: NAD(P)H-quinone oxidoreductase subunit 4L, chloroplastic (101 aa).

Transmembrane regions (helical) follow at residues 2–22 (ILEH…YGLI), 32–52 (MCLE…SDFF), and 61–81 (IFCI…LAIV).

It belongs to the complex I subunit 4L family. In terms of assembly, NDH is composed of at least 16 different subunits, 5 of which are encoded in the nucleus.

The protein resides in the plastid. It is found in the chloroplast thylakoid membrane. It carries out the reaction a plastoquinone + NADH + (n+1) H(+)(in) = a plastoquinol + NAD(+) + n H(+)(out). It catalyses the reaction a plastoquinone + NADPH + (n+1) H(+)(in) = a plastoquinol + NADP(+) + n H(+)(out). Functionally, NDH shuttles electrons from NAD(P)H:plastoquinone, via FMN and iron-sulfur (Fe-S) centers, to quinones in the photosynthetic chain and possibly in a chloroplast respiratory chain. The immediate electron acceptor for the enzyme in this species is believed to be plastoquinone. Couples the redox reaction to proton translocation, and thus conserves the redox energy in a proton gradient. This Draba nemorosa (Woodland whitlowgrass) protein is NAD(P)H-quinone oxidoreductase subunit 4L, chloroplastic.